We begin with the raw amino-acid sequence, 713 residues long: Probable tRNA (uracil-O(2)-)-methyltransferase (713 aa).

Disordered stretches follow at residues 49–92 and 480–508; these read TLRS…REGT and LHSR…HDAG. Phosphoserine is present on serine 76. Residues 79–89 show a composition bias toward basic and acidic residues; sequence GEPESGPRASR. Serine 489 carries the phosphoserine modification. The C3H1-type zinc finger occupies 669-698; it reads FKTRICWFFAHHPDGCVLPAAQCPFAHGPE.

This sequence belongs to the TRM44 family.

It localises to the cytoplasm. The catalysed reaction is uridine(44) in tRNA(Ser) + S-adenosyl-L-methionine = 2'-O-methyluridine(44) in tRNA(Ser) + S-adenosyl-L-homocysteine + H(+). Probable adenosyl-L-methionine (AdoMet)-dependent tRNA (uracil-O(2)-)-methyltransferase. The protein is Probable tRNA (uracil-O(2)-)-methyltransferase (Trmt44) of Mus musculus (Mouse).